The primary structure comprises 383 residues: Succinyl-diaminopimelate desuccinylase (383 aa).

His73 provides a ligand contact to Zn(2+). The active site involves Asp75. Asp107 is a Zn(2+) binding site. The active-site Proton acceptor is Glu141. Residues Glu142, Glu170, and His356 each contribute to the Zn(2+) site.

This sequence belongs to the peptidase M20A family. DapE subfamily. As to quaternary structure, homodimer. Zn(2+) is required as a cofactor. Requires Co(2+) as cofactor.

The enzyme catalyses N-succinyl-(2S,6S)-2,6-diaminopimelate + H2O = (2S,6S)-2,6-diaminopimelate + succinate. The protein operates within amino-acid biosynthesis; L-lysine biosynthesis via DAP pathway; LL-2,6-diaminopimelate from (S)-tetrahydrodipicolinate (succinylase route): step 3/3. Catalyzes the hydrolysis of N-succinyl-L,L-diaminopimelic acid (SDAP), forming succinate and LL-2,6-diaminopimelate (DAP), an intermediate involved in the bacterial biosynthesis of lysine and meso-diaminopimelic acid, an essential component of bacterial cell walls. The chain is Succinyl-diaminopimelate desuccinylase from Pseudomonas fluorescens (strain Pf0-1).